Consider the following 375-residue polypeptide: Cyclic AMP receptor 2 (375 aa).

The Extracellular segment spans residues 1 to 10 (MTIMSDIIAQ). Residues 11-30 (RTILLIADFSSIIGCSLVLI) form a helical membrane-spanning segment. At 31-44 (GFWRLKLLRNHITK) the chain is on the cytoplasmic side. A helical transmembrane segment spans residues 45–65 (IISLFCATSLFKDVISTIITL). Residues 66-82 (LYKPDQTESGFPCYLHA) are Extracellular-facing. The chain crosses the membrane as a helical span at residues 83 to 108 (IVITFGSLACWLWTLMLSFSIYNLIV). Topologically, residues 109-119 (RREPEPERFEK) are cytoplasmic. Residues 120–138 (FYFCLCYGLPLISTIVMLS) traverse the membrane as a helical segment. Residues 139 to 161 (THIIQPVGGWCWIGDNYDGYRFG) lie on the Extracellular side of the membrane. The helical transmembrane segment at 162 to 180 (LFYGPFFFIWGTSAILVGL) threads the bilayer. At 181-204 (TSKYTYSVIRSSVSDNKDKHMTYQ) the chain is on the cytoplasmic side. Ser192 bears the Phosphoserine mark. A helical transmembrane segment spans residues 205–223 (FKLINYIVVFLVCWVFAIV). The Extracellular portion of the chain corresponds to 224–234 (NRILNGLNQFP). Residues 235–259 (TVPNVLHTYFSVSHGFYASITFIYN) traverse the membrane as a helical segment. Topologically, residues 260 to 375 (NPLMWRYFGA…NNINNKNDMI (116 aa)) are cytoplasmic. A phosphoserine mark is found at Ser298 and Ser303. The segment at 338–375 (PKENENQNHHHHHHHHHHHNHYNNNNNNNNINNKNDMI) is disordered. The segment covering 346 to 358 (HHHHHHHHHHHNH) has biased composition (basic residues). Residues 359–375 (YNNNNNNNNINNKNDMI) show a composition bias toward low complexity.

This sequence belongs to the G-protein coupled receptor 5 family. C-terminal Ser or Thr residues may be phosphorylated.

It is found in the membrane. In terms of biological role, receptor for cAMP. Coordinates the aggregation of individual cells into a multicellular organism and regulates the expression of a large number of developmentally regulated genes. The activity of this receptor is mediated by G proteins. Plays a key role during tip formation and late development; involved in cAMP-directed patterning of pre stalk cells as they sort before and during tip formation. This is Cyclic AMP receptor 2 (carB) from Dictyostelium discoideum (Social amoeba).